Here is a 191-residue protein sequence, read N- to C-terminus: MGEKPWQPLLQSFEKLSNCVQTHLSNFIGIKNTPPSSQSTIQNPIISLDSSPPIATNSSSLQKLPLKDKSTGPVTKEDLGRATWTFLHTLAAQYPEKPTRQQKKDVKELMTILSRMYPCRECADHFKEILRSNPAQAGSQEEFSQWLCHVHNTVNRSLGKLVFPCERVDARWGKLECEQKSCDLHGTSMDF.

An ERV/ALR sulfhydryl oxidase domain is found at 72–172 (GPVTKEDLGR…FPCERVDARW (101 aa)). FAD contacts are provided by Lys-76, Arg-81, Trp-84, Glu-121, His-125, Cys-148, His-151, Asn-152, Asn-155, Lys-160, and Arg-171. Cys-119 and Cys-122 are oxidised to a cystine. Cys-148 and Cys-165 are joined by a disulfide. A disulfide bridge links Cys-177 with Cys-182. The Required for dimerization and substrate specificity signature appears at 177–182 (CEQKSC).

In terms of assembly, homodimer. FAD is required as a cofactor. Contains three disulfide bonds; one catalytic disulfide (Cys-119 to Cys-122), one structural disulfide (Cys-148 to Cys-165), and one shuttle disulfide (Cys-177 to Cys-182).

It localises to the mitochondrion. The catalysed reaction is 2 R'C(R)SH + O2 = R'C(R)S-S(R)CR' + H2O2. Its function is as follows. FAD-dependent sulfhydryl oxidase that catalyzes disulfide bond formation. Oxidizes thioredoxin in vitro. Required for the import and folding of small cysteine-containing proteins in the mitochondrial intermembrane space, and can act independently of the oxidoreductase MIA40. Can oxidize the cytochrome c oxidase assembly protein COX19, a typical substrate of MIA40. The polypeptide is FAD-linked sulfhydryl oxidase ERV1 (ERV1) (Arabidopsis thaliana (Mouse-ear cress)).